Here is a 343-residue protein sequence, read N- to C-terminus: Protein RecA (343 aa).

65–72 (GPESSGKT) lines the ATP pocket.

The protein belongs to the RecA family.

The protein localises to the cytoplasm. Its function is as follows. Can catalyze the hydrolysis of ATP in the presence of single-stranded DNA, the ATP-dependent uptake of single-stranded DNA by duplex DNA, and the ATP-dependent hybridization of homologous single-stranded DNAs. It interacts with LexA causing its activation and leading to its autocatalytic cleavage. In Campylobacter jejuni subsp. jejuni serotype O:6 (strain 81116 / NCTC 11828), this protein is Protein RecA.